Here is a 530-residue protein sequence, read N- to C-terminus: T-complex protein 1 subunit delta (530 aa).

Positions Met-1–Phe-13 are enriched in polar residues. Positions Met-1–Gln-20 are disordered.

The protein belongs to the TCP-1 chaperonin family. As to quaternary structure, heterooligomeric complex of about 850 to 900 kDa that forms two stacked rings, 12 to 16 nm in diameter.

It is found in the cytoplasm. Molecular chaperone; assists the folding of proteins upon ATP hydrolysis. Known to play a role, in vitro, in the folding of actin and tubulin. The polypeptide is T-complex protein 1 subunit delta (CCT4) (Kluyveromyces lactis (strain ATCC 8585 / CBS 2359 / DSM 70799 / NBRC 1267 / NRRL Y-1140 / WM37) (Yeast)).